Reading from the N-terminus, the 448-residue chain is MAAQVTDALKNLKVKDPNAVVESAAEAKANGNAQPEAEAEDSDDDDEEPVNGEGAGEGGAKKKRKRKKKPKKKAGANPKVQSSPPRVLLSNLFPSGEYPVGEEVEYRDENNYRTTSEEKRYLDRMNNDFLQEYRQGAEIHRQVRQYAKANIKPGQTLTEIAEGIEDSVRALTGHPGLEEGDNIKGGVAFPTGVNLDHIAAHYSPNAGNKTVLAYENVMKVDFGVHINGRIVDSAFTIAFDPMYDNLLEAVKQATNTGIKEAGIDARLGEIGEHIQETMESYEVEIKGQTYQVKPIRNLNGHDILQWKIHGGKSVPIVKSNDQTKMEEGEVFAIETFGSTGNGYVRDDLECSHYAKVADAPNVPLRIASAGKLLNVINKNFGTLPFCRRYLDRLGQDKYLLGLNALVSHGIVQDYPPLVDKKGSYTAQFEHTIVLRPNCKEVISRGDDY.

The interval methionine 1 to proline 94 is disordered. The segment covering alanine 37–valine 50 has biased composition (acidic residues). Positions lysine 61–alanine 74 are enriched in basic residues. Position 201 (histidine 201) interacts with substrate. The a divalent metal cation site is built by aspartate 221, aspartate 232, and histidine 301. Histidine 309 serves as a coordination point for substrate. Positions 334 and 429 each coordinate a divalent metal cation.

The protein belongs to the peptidase M24A family. Methionine aminopeptidase eukaryotic type 2 subfamily. Co(2+) serves as cofactor. The cofactor is Zn(2+). It depends on Mn(2+) as a cofactor. Requires Fe(2+) as cofactor.

The protein localises to the cytoplasm. It carries out the reaction Release of N-terminal amino acids, preferentially methionine, from peptides and arylamides.. Functionally, cotranslationally removes the N-terminal methionine from nascent proteins. The N-terminal methionine is often cleaved when the second residue in the primary sequence is small and uncharged (Met-Ala-, Cys, Gly, Pro, Ser, Thr, or Val). The sequence is that of Methionine aminopeptidase 2 from Botryotinia fuckeliana (strain B05.10) (Noble rot fungus).